The primary structure comprises 253 residues: Major prion protein (253 aa).

Residues 1–22 (MANLGCWMLVLFVATWSDLGLC) form the signal peptide. The interval 23-230 (KKRPKPGGWN…ESQAYYQRGS (208 aa)) is interaction with GRB2, ERI3 and SYN1. The tract at residues 26 to 108 (PKPGGWNTGG…WNKPSKPKTS (83 aa)) is disordered. 5 repeat units span residues 51–59 (PQGGGGWGQ), 60–67 (PHGGGWGQ), 68–75 (PHGGGWGQ), 76–83 (PHGGGWGQ), and 84–91 (PHGGGWGQ). Positions 51–91 (PQGGGGWGQPHGGGWGQPHGGGWGQPHGGGWGQPHGGGWGQ) are 5 X 8 AA tandem repeats of P-H-G-G-G-W-G-Q. A compositionally biased stretch (gly residues) spans 52 to 95 (QGGGGWGQPHGGGWGQPHGGGWGQPHGGGWGQPHGGGWGQGGGT). Residues His-61, Gly-62, Gly-63, His-69, Gly-70, Gly-71, His-77, Gly-78, Gly-79, His-85, Gly-86, and Gly-87 each coordinate Cu(2+). Cys-179 and Cys-214 form a disulfide bridge. Residues Asn-181 and Asn-197 are each glycosylated (N-linked (GlcNAc...) asparagine). Ser-230 carries GPI-anchor amidated serine lipidation. The propeptide at 231–253 (SMVFFSSPPVILLISFLIFLIVG) is removed in mature form.

This sequence belongs to the prion family. As to quaternary structure, monomer and homodimer. Has a tendency to aggregate into amyloid fibrils containing a cross-beta spine, formed by a steric zipper of superposed beta-strands. Soluble oligomers may represent an intermediate stage on the path to fibril formation. Copper binding may promote oligomerization. Interacts with GRB2, APP, ERI3/PRNPIP and SYN1. Mislocalized cytosolically exposed PrP interacts with MGRN1; this interaction alters MGRN1 subcellular location and causes lysosomal enlargement. Interacts with KIAA1191.

The protein resides in the cell membrane. It is found in the golgi apparatus. Its function is as follows. Its primary physiological function is unclear. Has cytoprotective activity against internal or environmental stresses. May play a role in neuronal development and synaptic plasticity. May be required for neuronal myelin sheath maintenance. May play a role in iron uptake and iron homeostasis. Soluble oligomers are toxic to cultured neuroblastoma cells and induce apoptosis (in vitro). Association with GPC1 (via its heparan sulfate chains) targets PRNP to lipid rafts. Also provides Cu(2+) or Zn(2+) for the ascorbate-mediated GPC1 deaminase degradation of its heparan sulfate side chains. The protein is Major prion protein (PRNP) of Trachypithecus francoisi (Francois' leaf monkey).